Consider the following 262-residue polypeptide: MDPRLSAVRQTCCCFNVRIATTALAIYHVIMSVLLFIEHSVEVAHGKASCKLSQMGYLRIADLISSFLLIAMLFIISLSLLIGVVKNREKYLLPFLSLQVMDYLLCLLTLLGSYIELPAYLKLASRSRASPSKFPLMTLQLLDFCLSILTLCSSYMEVPTYLNFKSMNHMNYLPSQEDMPHNQFIKMMIIFSIAFITVLIFKVYMFKCVWRCYRFIKCMNSVEEKRNSKMLQKVVLPSYEEALSLPSKTPEGGPAPPPYSEV.

5 helical membrane passes run 19–39, 64–84, 92–112, 134–154, and 184–204; these read IATT…FIEH, ISSF…LIGV, LLPF…TLLG, FPLM…LCSS, and FIKM…FKVY. Residue tyrosine 259 is modified to Phosphotyrosine.

It belongs to the LAPTM4/LAPTM5 transporter family. As to quaternary structure, binds to ubiquitin.

The protein localises to the lysosome membrane. In terms of biological role, may have a special functional role during embryogenesis and in adult hematopoietic cells. The chain is Lysosomal-associated transmembrane protein 5 (LAPTM5) from Pongo abelii (Sumatran orangutan).